The sequence spans 409 residues: L-cysteine:1D-myo-inositol 2-amino-2-deoxy-alpha-D-glucopyranoside ligase (409 aa).

C43 contacts Zn(2+). L-cysteinyl-5'-AMP-binding positions include 43 to 46, T58, and 81 to 83; these read CGIT and NVT. A 'HIGH' region motif is present at residues 45-55; that stretch reads ITPYDATHMGH. Positions 183 to 188 match the 'ERGGDP' region motif; sequence ERGGDP. Position 224 (W224) interacts with L-cysteinyl-5'-AMP. C228 provides a ligand contact to Zn(2+). Residue 246–248 participates in L-cysteinyl-5'-AMP binding; the sequence is GSD. H253 is a Zn(2+) binding site. V280 is an L-cysteinyl-5'-AMP binding site. The short motif at 286–290 is the 'KMSKS' region element; sequence KMSKS.

It belongs to the class-I aminoacyl-tRNA synthetase family. MshC subfamily. Monomer. Zn(2+) is required as a cofactor.

The catalysed reaction is 1D-myo-inositol 2-amino-2-deoxy-alpha-D-glucopyranoside + L-cysteine + ATP = 1D-myo-inositol 2-(L-cysteinylamino)-2-deoxy-alpha-D-glucopyranoside + AMP + diphosphate + H(+). Functionally, catalyzes the ATP-dependent condensation of GlcN-Ins and L-cysteine to form L-Cys-GlcN-Ins. The chain is L-cysteine:1D-myo-inositol 2-amino-2-deoxy-alpha-D-glucopyranoside ligase from Streptomyces scabiei (strain 87.22).